A 233-amino-acid chain; its full sequence is Uridylate kinase (233 aa).

Residues 8–11 (KLSG), Gly-51, and Arg-55 each bind ATP. UMP contacts are provided by residues Asp-68 and 129 to 136 (TSNPFFTT). Residues Thr-156, Tyr-162, and Asp-165 each coordinate ATP.

This sequence belongs to the UMP kinase family. As to quaternary structure, homohexamer.

The protein localises to the cytoplasm. The enzyme catalyses UMP + ATP = UDP + ADP. Its pathway is pyrimidine metabolism; CTP biosynthesis via de novo pathway; UDP from UMP (UMPK route): step 1/1. Inhibited by UTP. Catalyzes the reversible phosphorylation of UMP to UDP. This is Uridylate kinase from Thermosipho melanesiensis (strain DSM 12029 / CIP 104789 / BI429).